Consider the following 385-residue polypeptide: Urotensin-2 receptor (385 aa).

Residues 1–53 (MALSLESTSFPMLAVSRSTASELPGGFNVSHNSSWTGPTDPSSLQDLVATGVI) lie on the Extracellular side of the membrane. N-linked (GlcNAc...) asparagine glycosylation is found at Asn-28 and Asn-32. A helical membrane pass occupies residues 54-76 (GAVLSTMGVVGVVGNVYTLVVMC). Over 77-86 (RFLRASASMY) the chain is Cytoplasmic. A helical transmembrane segment spans residues 87 to 112 (VYVVNLALADLLYLLSIPFIVATYVT). Residues 113 to 123 (KDWHFGDVGCR) lie on the Extracellular side of the membrane. A disulfide bridge links Cys-122 with Cys-198. A helical membrane pass occupies residues 124-145 (VLFSLDFLTMHASIFTLTIMSS). The Cytoplasmic segment spans residues 146 to 166 (ERYAAVLRPLDTVQRSKGYRK). The helical transmembrane segment at 167–185 (LLALGTWLLALLLTLPMML) threads the bilayer. Over 186 to 208 (AIRLVRRGSKSLCLPAWGPRAHR) the chain is Extracellular. The helical transmembrane segment at 209–231 (TYLTLLFGTSIVGPGLVIGLLYI) threads the bilayer. Residues 232–257 (RLARAYWLSQQASFKQTRRLPNPRVL) are Cytoplasmic-facing. The chain crosses the membrane as a helical span at residues 258–283 (YLILGIVLLFWACFLPFWLWQLLAQY). At 284–298 (HQAMPLTPETARIIN) the chain is on the extracellular side. A helical transmembrane segment spans residues 299 to 320 (YLTACLTYGNSCINPFLYTLLT). The Cytoplasmic portion of the chain corresponds to 321-385 (KNYREYLRGR…SPVPPNGAFV (65 aa)).

This sequence belongs to the G-protein coupled receptor 1 family.

Its subcellular location is the cell membrane. Its function is as follows. High affinity receptor for urotensin-2 and urotensin-2B. The activity of this receptor is mediated by a G-protein that activate a phosphatidylinositol-calcium second messenger system. The chain is Urotensin-2 receptor (Uts2r) from Mus musculus (Mouse).